The following is a 561-amino-acid chain: Dihydroxy-acid dehydratase (561 aa).

Residue Cys-50 participates in [2Fe-2S] cluster binding. Position 82 (Asp-82) interacts with Mg(2+). Cys-123 is a [2Fe-2S] cluster binding site. 2 residues coordinate Mg(2+): Asp-124 and Lys-125. An N6-carboxylysine modification is found at Lys-125. [2Fe-2S] cluster is bound at residue Cys-195. Mg(2+) is bound at residue Glu-447. Ser-473 (proton acceptor) is an active-site residue.

It belongs to the IlvD/Edd family. As to quaternary structure, homodimer. Requires [2Fe-2S] cluster as cofactor. Mg(2+) serves as cofactor.

It carries out the reaction (2R)-2,3-dihydroxy-3-methylbutanoate = 3-methyl-2-oxobutanoate + H2O. The catalysed reaction is (2R,3R)-2,3-dihydroxy-3-methylpentanoate = (S)-3-methyl-2-oxopentanoate + H2O. Its pathway is amino-acid biosynthesis; L-isoleucine biosynthesis; L-isoleucine from 2-oxobutanoate: step 3/4. It functions in the pathway amino-acid biosynthesis; L-valine biosynthesis; L-valine from pyruvate: step 3/4. Its function is as follows. Functions in the biosynthesis of branched-chain amino acids. Catalyzes the dehydration of (2R,3R)-2,3-dihydroxy-3-methylpentanoate (2,3-dihydroxy-3-methylvalerate) into 2-oxo-3-methylpentanoate (2-oxo-3-methylvalerate) and of (2R)-2,3-dihydroxy-3-methylbutanoate (2,3-dihydroxyisovalerate) into 2-oxo-3-methylbutanoate (2-oxoisovalerate), the penultimate precursor to L-isoleucine and L-valine, respectively. The chain is Dihydroxy-acid dehydratase from Chloroflexus aurantiacus (strain ATCC 29366 / DSM 635 / J-10-fl).